The chain runs to 491 residues: Ketol-acid reductoisomerase (NADP(+)) (491 aa).

Positions 14–208 (LKHLGKCRFM…GSHRAGVLES (195 aa)) constitute a KARI N-terminal Rossmann domain. NADP(+) contacts are provided by residues 45–48 (CGSQ), R68, and S78. Residue H132 is part of the active site. G158 is an NADP(+) binding site. KARI C-terminal knotted domains follow at residues 209 to 344 (SFVA…QAPN) and 345 to 485 (YQQE…MQNM). D217, E221, E389, and E393 together coordinate Mg(2+). S414 lines the substrate pocket.

It belongs to the ketol-acid reductoisomerase family. It depends on Mg(2+) as a cofactor.

The catalysed reaction is (2R)-2,3-dihydroxy-3-methylbutanoate + NADP(+) = (2S)-2-acetolactate + NADPH + H(+). It catalyses the reaction (2R,3R)-2,3-dihydroxy-3-methylpentanoate + NADP(+) = (S)-2-ethyl-2-hydroxy-3-oxobutanoate + NADPH + H(+). Its pathway is amino-acid biosynthesis; L-isoleucine biosynthesis; L-isoleucine from 2-oxobutanoate: step 2/4. It functions in the pathway amino-acid biosynthesis; L-valine biosynthesis; L-valine from pyruvate: step 2/4. In terms of biological role, involved in the biosynthesis of branched-chain amino acids (BCAA). Catalyzes an alkyl-migration followed by a ketol-acid reduction of (S)-2-acetolactate (S2AL) to yield (R)-2,3-dihydroxy-isovalerate. In the isomerase reaction, S2AL is rearranged via a Mg-dependent methyl migration to produce 3-hydroxy-3-methyl-2-ketobutyrate (HMKB). In the reductase reaction, this 2-ketoacid undergoes a metal-dependent reduction by NADPH to yield (R)-2,3-dihydroxy-isovalerate. This is Ketol-acid reductoisomerase (NADP(+)) from Blochmanniella pennsylvanica (strain BPEN).